The sequence spans 469 residues: Transcription factor SOX-10 (469 aa).

5 disordered regions span residues 1-70 (MAEE…DDDK), 163-203 (LRMQ…QGGA), 215-278 (LDHR…DFGN), 357-378 (AQVK…QPST), and 436-469 (RPLY…LSRP). The segment covering 23–32 (LSPGSAPSLG) has biased composition (low complexity). Residue Ser24 is modified to Phosphoserine. A compositionally biased stretch (gly residues) spans 33-44 (PDGGGGGGGGSG). Residues 65–105 (EADDDKFPVCIREAVSQVLSGYDWTLVPMPVRVNGASKSKP) form a dimerization (DIM) region. Residues 107–175 (VKRPMNAFMV…QHKKDHPDYK (69 aa)) constitute a DNA-binding region (HMG box). Composition is skewed to basic and acidic residues over residues 163–176 (LRMQ…DYKY) and 257–274 (ADPK…KPHI). Positions 231–313 (PEHPSGQSHG…LPPNGHPGHV (83 aa)) are transactivation domain (TAM). Positions 356 to 469 (KAQVKTETAG…QPVYTTLSRP (114 aa)) are transactivation domain (TAC). Over residues 443–469 (SDPSPSGPQSHSPTHWEQPVYTTLSRP) the composition is skewed to polar residues.

Monomer. Interacts with ARMCX3 at the mitochondrial outer membrane surface. Interacts with PAX3.

It localises to the cytoplasm. The protein resides in the nucleus. The protein localises to the mitochondrion outer membrane. In terms of biological role, transcription factor that plays a central role in developing and mature glia. Specifically activates expression of myelin genes, during oligodendrocyte (OL) maturation, such as DUSP15 and MYRF, thereby playing a central role in oligodendrocyte maturation and CNS myelination. Once induced, MYRF cooperates with SOX10 to implement the myelination program. Transcriptional activator of MITF, acting synergistically with PAX3. Transcriptional activator of MBP, via binding to the gene promoter. This chain is Transcription factor SOX-10 (SOX10), found in Sus scrofa (Pig).